The following is a 296-amino-acid chain: uncharacterized protein (296 aa).

The N-terminal stretch at 1–20 (MKKLLLIIITVFFAFNVAQA) is a signal peptide.

This is an uncharacterized protein from Rickettsia felis (strain ATCC VR-1525 / URRWXCal2) (Rickettsia azadi).